The primary structure comprises 449 residues: Maltoporin (449 aa).

The first 24 residues, 1-24 (MITLRKLPLAVAVAAGVMSAQAMA), serve as a signal peptide directing secretion.

This sequence belongs to the porin LamB (TC 1.B.3) family. As to quaternary structure, homotrimer formed of three 18-stranded antiparallel beta-barrels, containing three independent channels.

It is found in the cell outer membrane. It carries out the reaction beta-maltose(in) = beta-maltose(out). Its function is as follows. Involved in the transport of maltose and maltodextrins. The sequence is that of Maltoporin from Citrobacter koseri (strain ATCC BAA-895 / CDC 4225-83 / SGSC4696).